Here is a 321-residue protein sequence, read N- to C-terminus: Degreening-related gene dee76 protein (321 aa).

This sequence belongs to the Mo25 family.

In Auxenochlorella protothecoides (Green microalga), this protein is Degreening-related gene dee76 protein (DEE76).